We begin with the raw amino-acid sequence, 291 residues long: Probable alpha-L-glutamate ligase (291 aa).

The region spanning 104–287 (HQLLASQGID…VAGTIIQHLE (184 aa)) is the ATP-grasp domain. ATP-binding positions include Lys-141, 178-179 (EF), Asp-187, and 211-213 (RSN). Asp-248, Glu-260, and Asn-262 together coordinate Mg(2+). 3 residues coordinate Mn(2+): Asp-248, Glu-260, and Asn-262.

The protein belongs to the RimK family. Mg(2+) is required as a cofactor. It depends on Mn(2+) as a cofactor.

The polypeptide is Probable alpha-L-glutamate ligase (Xanthomonas campestris pv. campestris (strain 8004)).